A 163-amino-acid polypeptide reads, in one-letter code: Bacterial microcompartment assembly protein PduM (163 aa).

The protein belongs to the PduM family. Interacts with shell protein PduK.

The protein localises to the bacterial microcompartment. Its pathway is polyol metabolism; 1,2-propanediol degradation. Functionally, plays an essential role in assembly and/or stability of the bacterial microcompartment (BMC) dedicated to 1,2-propanediol (1,2-PD) degradation. Overexpression impairs BMC formation. In terms of biological role, the 1,2-PD-specific bacterial microcompartment (BMC) concentrates low levels of 1,2-PD catabolic enzymes, concentrates volatile reaction intermediates thus enhancing pathway flux and keeps the level of toxic, mutagenic propionaldehyde low. In Salmonella typhimurium (strain LT2 / SGSC1412 / ATCC 700720), this protein is Bacterial microcompartment assembly protein PduM.